The chain runs to 582 residues: Phosphoribosylaminoimidazole carboxylase (582 aa).

Residues 114–305 enclose the ATP-grasp domain; the sequence is KKYLAERGVA…QFENHLRAIL (192 aa). Residue 143 to 200 coordinates ATP; the sequence is AGRLGLPLMLKAKTLAYDGRGNSPLKSASSGDIQASLKFLGDRPLYAEGWAPFVKEVA.

The protein in the C-terminal section; belongs to the AIR carboxylase family. Class I subfamily.

The catalysed reaction is 5-amino-1-(5-phospho-D-ribosyl)imidazole-4-carboxylate + H(+) = 5-amino-1-(5-phospho-beta-D-ribosyl)imidazole + CO2. The protein operates within purine metabolism; IMP biosynthesis via de novo pathway; 5-amino-1-(5-phospho-D-ribosyl)imidazole-4-carboxylate from 5-amino-1-(5-phospho-D-ribosyl)imidazole (carboxylase route): step 1/1. The sequence is that of Phosphoribosylaminoimidazole carboxylase (ADE2) from Cryptococcus neoformans var. neoformans serotype D (strain JEC21 / ATCC MYA-565) (Filobasidiella neoformans).